We begin with the raw amino-acid sequence, 121 residues long: Large ribosomal subunit protein uL22 (121 aa).

Belongs to the universal ribosomal protein uL22 family. As to quaternary structure, part of the 50S ribosomal subunit.

Functionally, this protein binds specifically to 23S rRNA; its binding is stimulated by other ribosomal proteins, e.g. L4, L17, and L20. It is important during the early stages of 50S assembly. It makes multiple contacts with different domains of the 23S rRNA in the assembled 50S subunit and ribosome. The globular domain of the protein is located near the polypeptide exit tunnel on the outside of the subunit, while an extended beta-hairpin is found that lines the wall of the exit tunnel in the center of the 70S ribosome. In Synechocystis sp. (strain ATCC 27184 / PCC 6803 / Kazusa), this protein is Large ribosomal subunit protein uL22.